The chain runs to 299 residues: 4-hydroxy-tetrahydrodipicolinate synthase (299 aa).

Thr47 lines the pyruvate pocket. The active-site Proton donor/acceptor is Tyr136. Residue Lys164 is the Schiff-base intermediate with substrate of the active site. Ala205 contributes to the pyruvate binding site.

The protein belongs to the DapA family. As to quaternary structure, homotetramer; dimer of dimers.

Its subcellular location is the cytoplasm. It catalyses the reaction L-aspartate 4-semialdehyde + pyruvate = (2S,4S)-4-hydroxy-2,3,4,5-tetrahydrodipicolinate + H2O + H(+). It participates in amino-acid biosynthesis; L-lysine biosynthesis via DAP pathway; (S)-tetrahydrodipicolinate from L-aspartate: step 3/4. In terms of biological role, catalyzes the condensation of (S)-aspartate-beta-semialdehyde [(S)-ASA] and pyruvate to 4-hydroxy-tetrahydrodipicolinate (HTPA). The chain is 4-hydroxy-tetrahydrodipicolinate synthase from Pediococcus pentosaceus (strain ATCC 25745 / CCUG 21536 / LMG 10740 / 183-1w).